Here is a 949-residue protein sequence, read N- to C-terminus: Protein translocase subunit SecA 1 (949 aa).

Residues Gln86, 104–108 (GEGKT), and Asp493 each bind ATP. The disordered stretch occupies residues 869–949 (VDGGARERAP…AKPPKSVKKR (81 aa)). Residues 925–934 (SRRERREAAR) show a composition bias toward basic and acidic residues.

This sequence belongs to the SecA family. In terms of assembly, monomer and homodimer. Part of the essential Sec protein translocation apparatus which comprises SecA, SecYEG and auxiliary proteins SecDF. Other proteins may also be involved.

Its subcellular location is the cell membrane. The protein localises to the cytoplasm. It catalyses the reaction ATP + H2O + cellular proteinSide 1 = ADP + phosphate + cellular proteinSide 2.. Part of the Sec protein translocase complex. Interacts with the SecYEG preprotein conducting channel. Has a central role in coupling the hydrolysis of ATP to the transfer of proteins into and across the cell membrane, serving as an ATP-driven molecular motor driving the stepwise translocation of polypeptide chains across the membrane. This chain is Protein translocase subunit SecA 1, found in Mycobacterium bovis (strain ATCC BAA-935 / AF2122/97).